Here is a 279-residue protein sequence, read N- to C-terminus: Shikimate dehydrogenase (NADP(+)) (279 aa).

Shikimate-binding positions include 19 to 21 and T66; that span reads SRS. K70 serves as the catalytic Proton acceptor. The shikimate site is built by N91 and D106. Residues 129–133 and F222 contribute to the NADP(+) site; that span reads GAGGA. Position 224 (Y224) interacts with shikimate. An NADP(+)-binding site is contributed by G243.

It belongs to the shikimate dehydrogenase family. In terms of assembly, homodimer.

The enzyme catalyses shikimate + NADP(+) = 3-dehydroshikimate + NADPH + H(+). It participates in metabolic intermediate biosynthesis; chorismate biosynthesis; chorismate from D-erythrose 4-phosphate and phosphoenolpyruvate: step 4/7. Its function is as follows. Involved in the biosynthesis of the chorismate, which leads to the biosynthesis of aromatic amino acids. Catalyzes the reversible NADPH linked reduction of 3-dehydroshikimate (DHSA) to yield shikimate (SA). This is Shikimate dehydrogenase (NADP(+)) from Anaeromyxobacter sp. (strain Fw109-5).